The chain runs to 249 residues: MLILLTNDDGIASPGLQALKDALKERHDVVTLAPVKDMSGTAHAISRGEDIKLTRIAEYEVAINGTPTDCVMAGLRMVLRRPPDLLVSGINMGANVAEDLSYSATAGAAWEGALSGIPSMAVSLCGSAAPWHFESAIKVTHMVIRQWLENPLPPGTFLNVNVPNVPEYELKNPKPTRQGLRFNWPPPPVTAAGNPAFWDPTIPTPREEEFQLATDEEALRDGFTSVTALHCLFRHPHATERLKAWSLFR.

A divalent metal cation contacts are provided by D8, D9, S39, and N91.

Belongs to the SurE nucleotidase family. A divalent metal cation serves as cofactor.

It localises to the cytoplasm. It carries out the reaction a ribonucleoside 5'-phosphate + H2O = a ribonucleoside + phosphate. In terms of biological role, nucleotidase that shows phosphatase activity on nucleoside 5'-monophosphates. This chain is 5'-nucleotidase SurE, found in Magnetococcus marinus (strain ATCC BAA-1437 / JCM 17883 / MC-1).